We begin with the raw amino-acid sequence, 277 residues long: Prohibitin-3, mitochondrial (277 aa).

An N-acetylglycine modification is found at glycine 2. Residues 2-6 (GSQQA) are Mitochondrial matrix-facing. The chain crosses the membrane as a helical; Signal-anchor for type II membrane protein span at residues 7-28 (AVSFLSNLAKAAFGLGTAATVL). Topologically, residues 29-277 (NTSLFTVDGG…GQSMLFALNR (249 aa)) are mitochondrial intermembrane.

It belongs to the prohibitin family. In terms of assembly, component of a prohibitin multimeric complex in mitochondrial membranes. As to expression, mostly expressed in proliferative tissues, including vasculature, shoot and root apical tissues. Expressed in roots, stems, leaves and flowers (at protein level).

It is found in the cell membrane. The protein localises to the mitochondrion inner membrane. The protein resides in the nucleus. Its subcellular location is the cytoplasm. Functionally, prohibitin probably acts as a holdase/unfoldase for the stabilization of newly synthesized mitochondrial proteins. Necessary for mitochondrial and cell metabolism and biogenesis. Required to regulate the ethylene-mediated signaling; involved in growth maintenance in the presence of ethylene. Functions in nitric oxide (NO)-mediated responses and in hydrogen peroxide-induced NO accumulation. The protein is Prohibitin-3, mitochondrial (PHB3) of Arabidopsis thaliana (Mouse-ear cress).